The primary structure comprises 323 residues: Putative HTH-type transcriptional regulatory protein Mbur_1811 (323 aa).

An HTH cro/C1-type domain is found at 132–190 (LKEARMNVSMSLGALASELGVSRRTISKYEEGQMDASIDIVLHLEEILDMALAKSIDIL). The H-T-H motif DNA-binding region spans 143-162 (LGALASELGVSRRTISKYEE).

The polypeptide is Putative HTH-type transcriptional regulatory protein Mbur_1811 (Methanococcoides burtonii (strain DSM 6242 / NBRC 107633 / OCM 468 / ACE-M)).